A 365-amino-acid polypeptide reads, in one-letter code: Zinc finger MYND domain-containing protein 12 (365 aa).

Residues Cys-17, Cys-20, Cys-28, Cys-31, Cys-37, His-41, His-50, and Cys-54 each contribute to the Zn(2+) site. The segment at 17 to 54 adopts an MYND-type; atypical zinc-finger fold; the sequence is CEVCEAPAERVCAACTVTYYCGVVHQKADWDSIHEKIC. 2 TPR repeats span residues 172–205 and 214–247; these read SLLHRNLGLLYIAKKNYEEARYHLANDIYFASCA and SGGYFHLANIFYDLKKLDLADTLYTKVSEIWHAY.

Expressed predominantly in the testis.

The protein localises to the cell projection. Its subcellular location is the cilium. The protein resides in the flagellum. Functionally, required for sperm flagellum function and male fertility. The polypeptide is Zinc finger MYND domain-containing protein 12 (ZMYND12) (Homo sapiens (Human)).